We begin with the raw amino-acid sequence, 272 residues long: Nitrogenase iron protein (272 aa).

8-15 (GKGGIGKS) contributes to the ATP binding site. Residue Cys-94 coordinates [4Fe-4S] cluster. Arg-97 carries the ADP-ribosylarginine; by dinitrogenase reductase ADP-ribosyltransferase modification. Cys-129 serves as a coordination point for [4Fe-4S] cluster.

The protein belongs to the NifH/BchL/ChlL family. Homodimer. [4Fe-4S] cluster serves as cofactor. In terms of processing, the reversible ADP-ribosylation of Arg-97 inactivates the nitrogenase reductase and regulates nitrogenase activity.

The enzyme catalyses N2 + 8 reduced [2Fe-2S]-[ferredoxin] + 16 ATP + 16 H2O = H2 + 8 oxidized [2Fe-2S]-[ferredoxin] + 2 NH4(+) + 16 ADP + 16 phosphate + 6 H(+). In terms of biological role, the key enzymatic reactions in nitrogen fixation are catalyzed by the nitrogenase complex, which has 2 components: the iron protein and the molybdenum-iron protein. The chain is Nitrogenase iron protein from Clostridium acetobutylicum (strain ATCC 824 / DSM 792 / JCM 1419 / IAM 19013 / LMG 5710 / NBRC 13948 / NRRL B-527 / VKM B-1787 / 2291 / W).